The chain runs to 519 residues: MAAPTEEDPRRDTSLMINERCNFPHNMLSEENINFIQDAVCNGDLGAVAALNSGLPMAPYMLEALLAVRVKHRLTKVRQTLEPVICYTISVAHLINGTRILRSATAKHATAWGPNDKHRAESGLRRIYRALNLEDNPFDLVEAVGDLDLSQGAYEGYVRHIYSLMKSLGHDVGHLSRSLDYSTMTVFNYLYESPLFTSQEAVTMYSRNLAGITKMSREPFETLSVVHRSKEPPEILNDMLFLLSVGRMIVLHQESLRALRKNLILTASALCSILYTAYTQVPETKSLFREVAHEAHALLSSRSPDTPNFRPFVACMLQFIKQIIAADVYTCPRYLTNQILAVTARMHGLEGAAMGHDDDLDIEVDPGNPYSAKYRMNNPYNDQNIFKCPRSLVHYVGDALFKKTMTQELLVSCTDQEATYQTYELPSVSELVGEGVAKRAHLTPDQLSHYLSVVSTPVEVVTDDIEDGEQEEDLFADVSVAPASPVRPIRGGGQRMANMRGARPYSTVQRGRRRHESEV.

A disordered region spans residues 485–519 (PVRPIRGGGQRMANMRGARPYSTVQRGRRRHESEV). The span at 510 to 519 (RGRRRHESEV) shows a compositional bias: basic residues.

The protein localises to the host nucleus. Plays a role in the inhibition of host type I interferon production within the host nucleus. Targets specifically the NF-kappa-B-mediated interferon-beta transcription. The protein is Protein M35 (M35) of Mus musculus (Mouse).